Consider the following 246-residue polypeptide: MNKKTKIEGLENFLTLNNIIFKDIKYYIQALTHKTYANEHANIESYDILEFIGDAILQMKSSIFIFQHFQNITEGEASLIRAKNVCSSGLSELSKKLGLSKLLLISKGSEHLRENVKINADLFESFVAAIYLDLGDEKLEEFLKEIFYPYISTTNLESIKDPKSSFQEYIQSYSNEIIEYKITQLENELRSELFKAELMHNGITYGVGFGKTKKVAEEEAATRALETLKAPSKQTIKKAIKAEKKE.

Residues 10 to 135 (LENFLTLNNI…FVAAIYLDLG (126 aa)) enclose the RNase III domain. E50 lines the Mg(2+) pocket. The active site involves D54. Mg(2+) is bound by residues D121 and E124. E124 is a catalytic residue. Positions 161–230 (DPKSSFQEYI…ATRALETLKA (70 aa)) constitute a DRBM domain.

Belongs to the ribonuclease III family. Homodimer. It depends on Mg(2+) as a cofactor.

It localises to the cytoplasm. The enzyme catalyses Endonucleolytic cleavage to 5'-phosphomonoester.. In terms of biological role, digests double-stranded RNA. Involved in the processing of primary rRNA transcript to yield the immediate precursors to the large and small rRNAs (23S and 16S). Processes some mRNAs, and tRNAs when they are encoded in the rRNA operon. Processes pre-crRNA and tracrRNA of type II CRISPR loci if present in the organism. In Mycoplasma mobile (strain ATCC 43663 / 163K / NCTC 11711) (Mesomycoplasma mobile), this protein is Ribonuclease 3.